The chain runs to 339 residues: UDP-N-acetylenolpyruvoylglucosamine reductase (339 aa).

The region spanning 18–189 is the FAD-binding PCMH-type domain; the sequence is GIDVRARLLA…LRVRLRLTRR (172 aa). Arg-166 is an active-site residue. Ser-239 acts as the Proton donor in catalysis. Residue Glu-335 is part of the active site.

It belongs to the MurB family. The cofactor is FAD.

The protein localises to the cytoplasm. It carries out the reaction UDP-N-acetyl-alpha-D-muramate + NADP(+) = UDP-N-acetyl-3-O-(1-carboxyvinyl)-alpha-D-glucosamine + NADPH + H(+). It functions in the pathway cell wall biogenesis; peptidoglycan biosynthesis. In terms of biological role, cell wall formation. This Pseudomonas aeruginosa (strain ATCC 15692 / DSM 22644 / CIP 104116 / JCM 14847 / LMG 12228 / 1C / PRS 101 / PAO1) protein is UDP-N-acetylenolpyruvoylglucosamine reductase.